Here is a 194-residue protein sequence, read N- to C-terminus: Holliday junction branch migration complex subunit RuvA (194 aa).

Positions 1–64 are domain I; sequence MIGRITGLLL…EDVHLLFGFM (64 aa). The segment at 65–140 is domain II; the sequence is TEQERALFRQ…KIDPVAILSE (76 aa). A flexible linker region spans residues 140–143; it reads EAGA. The interval 144–194 is domain III; it reads AASNVDKDILSALLALGYNGREVNRALEQLSEGVTVSDGIMQSLKFLSKVK.

This sequence belongs to the RuvA family. In terms of assembly, homotetramer. Forms an RuvA(8)-RuvB(12)-Holliday junction (HJ) complex. HJ DNA is sandwiched between 2 RuvA tetramers; dsDNA enters through RuvA and exits via RuvB. An RuvB hexamer assembles on each DNA strand where it exits the tetramer. Each RuvB hexamer is contacted by two RuvA subunits (via domain III) on 2 adjacent RuvB subunits; this complex drives branch migration. In the full resolvosome a probable DNA-RuvA(4)-RuvB(12)-RuvC(2) complex forms which resolves the HJ.

Its subcellular location is the cytoplasm. The RuvA-RuvB-RuvC complex processes Holliday junction (HJ) DNA during genetic recombination and DNA repair, while the RuvA-RuvB complex plays an important role in the rescue of blocked DNA replication forks via replication fork reversal (RFR). RuvA specifically binds to HJ cruciform DNA, conferring on it an open structure. The RuvB hexamer acts as an ATP-dependent pump, pulling dsDNA into and through the RuvAB complex. HJ branch migration allows RuvC to scan DNA until it finds its consensus sequence, where it cleaves and resolves the cruciform DNA. This Nitrosomonas eutropha (strain DSM 101675 / C91 / Nm57) protein is Holliday junction branch migration complex subunit RuvA.